The chain runs to 423 residues: Large ribosomal subunit protein mL37 (423 aa).

A mitochondrion-targeting transit peptide spans 1-29; it reads MALASGPARRVLARPWGLGLEGCGVPRRG.

It belongs to the mitochondrion-specific ribosomal protein mL37 family. As to quaternary structure, component of the mitochondrial ribosome large subunit (39S) which comprises a 16S rRNA and about 50 distinct proteins.

Its subcellular location is the mitochondrion. This Bos taurus (Bovine) protein is Large ribosomal subunit protein mL37 (MRPL37).